The chain runs to 82 residues: uncharacterized protein (82 aa).

Its function is as follows. Could be a silencing control element for the regulation of the restriction system. This is an uncharacterized protein from Herpetosiphon aurantiacus (Herpetosiphon giganteus).